The following is a 284-amino-acid chain: 4-diphosphocytidyl-2-C-methyl-D-erythritol kinase (284 aa).

Lysine 14 is a catalytic residue. Proline 97–serine 107 provides a ligand contact to ATP. The active site involves aspartate 139.

This sequence belongs to the GHMP kinase family. IspE subfamily.

It carries out the reaction 4-CDP-2-C-methyl-D-erythritol + ATP = 4-CDP-2-C-methyl-D-erythritol 2-phosphate + ADP + H(+). The protein operates within isoprenoid biosynthesis; isopentenyl diphosphate biosynthesis via DXP pathway; isopentenyl diphosphate from 1-deoxy-D-xylulose 5-phosphate: step 3/6. Functionally, catalyzes the phosphorylation of the position 2 hydroxy group of 4-diphosphocytidyl-2C-methyl-D-erythritol. The chain is 4-diphosphocytidyl-2-C-methyl-D-erythritol kinase from Pseudoalteromonas translucida (strain TAC 125).